The primary structure comprises 160 residues: Siroheme decarboxylase NirH subunit (160 aa).

It belongs to the Ahb/Nir family. Forms a complex composed of NirDL, NirG and NirH. All proteins are required for the total conversion of siroheme to didecarboxysiroheme.

The enzyme catalyses siroheme + 2 H(+) = 12,18-didecarboxysiroheme + 2 CO2. Its pathway is porphyrin-containing compound metabolism. Its function is as follows. Involved in heme d1 biosynthesis. Catalyzes the decarboxylation of siroheme into didecarboxysiroheme. Siroheme is probably decarboxylated to monodecarboxysiroheme, which is in turn decarboxylated to didecarboxysiroheme. This Paracoccus pantotrophus (Thiosphaera pantotropha) protein is Siroheme decarboxylase NirH subunit.